The following is a 436-amino-acid chain: Adenylosuccinate synthetase (436 aa).

GTP contacts are provided by residues 22 to 28 (GDEGKGK) and 50 to 52 (GHE). Residue Asp23 is the Proton acceptor of the active site. Residues Asp23 and Gly50 each coordinate Mg(2+). Residues 23–26 (DEGK), 48–51 (NAGH), Thr141, Arg155, Asn231, Thr246, and Arg310 each bind IMP. The active-site Proton donor is His51. Residue 306-312 (VSTARVR) participates in substrate binding. Residues Arg312, 338–340 (KMD), and 424–426 (GVG) contribute to the GTP site.

It belongs to the adenylosuccinate synthetase family. As to quaternary structure, homodimer. Requires Mg(2+) as cofactor.

The protein resides in the cytoplasm. The enzyme catalyses IMP + L-aspartate + GTP = N(6)-(1,2-dicarboxyethyl)-AMP + GDP + phosphate + 2 H(+). The protein operates within purine metabolism; AMP biosynthesis via de novo pathway; AMP from IMP: step 1/2. Its function is as follows. Plays an important role in the salvage pathway for purine nucleotide biosynthesis. Catalyzes the first committed step in the biosynthesis of AMP from IMP. This Babesia bovis protein is Adenylosuccinate synthetase.